Reading from the N-terminus, the 464-residue chain is Argininosuccinate lyase (464 aa).

This sequence belongs to the lyase 1 family. Argininosuccinate lyase subfamily.

Its subcellular location is the cytoplasm. The catalysed reaction is 2-(N(omega)-L-arginino)succinate = fumarate + L-arginine. It functions in the pathway amino-acid biosynthesis; L-arginine biosynthesis; L-arginine from L-ornithine and carbamoyl phosphate: step 3/3. This is Argininosuccinate lyase from Moorella thermoacetica (strain ATCC 39073 / JCM 9320).